The following is a 445-amino-acid chain: Proline--tRNA ligase (445 aa).

The protein belongs to the class-II aminoacyl-tRNA synthetase family. ProS type 2 subfamily. In terms of assembly, homodimer.

Its subcellular location is the cytoplasm. The catalysed reaction is tRNA(Pro) + L-proline + ATP = L-prolyl-tRNA(Pro) + AMP + diphosphate. Its function is as follows. Catalyzes the attachment of proline to tRNA(Pro) in a two-step reaction: proline is first activated by ATP to form Pro-AMP and then transferred to the acceptor end of tRNA(Pro). In Caulobacter sp. (strain K31), this protein is Proline--tRNA ligase.